The chain runs to 674 residues: Probable L-type lectin-domain containing receptor kinase I.5 (674 aa).

The signal sequence occupies residues 1–22 (MSKGLFLIWLISSFHLISFSTS). Residues 23–286 (SKDTSFVFNG…RPRAEHKKVQ (264 aa)) lie on the Extracellular side of the membrane. The interval 25-258 (DTSFVFNGFG…YHYLLGWSFS (234 aa)) is legume-lectin like. 5 N-linked (GlcNAc...) asparagine glycosylation sites follow: Asn-124, Asn-181, Asn-185, Asn-204, and Asn-225. A helical membrane pass occupies residues 287-307 (FALIIALPVILAIVVMAVLAG). Residues 308–674 (VYYHRKKKYA…DHEQPLEFKS (367 aa)) are Cytoplasmic-facing. In terms of domain architecture, Protein kinase spans 344 to 625 (FHKDRFLGRG…LPLPDFSPYT (282 aa)). Residues 350-358 (LGRGGFGEV) and Lys-372 contribute to the ATP site. The active-site Proton acceptor is Asp-468. Low complexity predominate over residues 649-662 (NWSAPSASSSSANN). The segment at 649–674 (NWSAPSASSSSANNSKDHEQPLEFKS) is disordered. Residues 663–674 (SKDHEQPLEFKS) are compositionally biased toward basic and acidic residues.

In the C-terminal section; belongs to the protein kinase superfamily. Ser/Thr protein kinase family. The protein in the N-terminal section; belongs to the leguminous lectin family.

The protein localises to the cell membrane. The enzyme catalyses L-seryl-[protein] + ATP = O-phospho-L-seryl-[protein] + ADP + H(+). It carries out the reaction L-threonyl-[protein] + ATP = O-phospho-L-threonyl-[protein] + ADP + H(+). This chain is Probable L-type lectin-domain containing receptor kinase I.5 (LECRK15), found in Arabidopsis thaliana (Mouse-ear cress).